A 604-amino-acid polypeptide reads, in one-letter code: Phenylalanine--tRNA ligase beta subunit (604 aa).

Residues 327-402 (YFQEKREVAH…LGRTLDRFSP (76 aa)) enclose the B5 domain. The Mg(2+) site is built by Asp-380, Asp-386, Glu-389, and Glu-390.

It belongs to the phenylalanyl-tRNA synthetase beta subunit family. Type 2 subfamily. As to quaternary structure, tetramer of two alpha and two beta subunits. Mg(2+) is required as a cofactor.

The protein localises to the cytoplasm. It catalyses the reaction tRNA(Phe) + L-phenylalanine + ATP = L-phenylalanyl-tRNA(Phe) + AMP + diphosphate + H(+). This is Phenylalanine--tRNA ligase beta subunit from Treponema pallidum subsp. pallidum (strain SS14).